A 383-amino-acid chain; its full sequence is S-adenosylmethionine synthase (383 aa).

Residue His-15 coordinates ATP. Asp-17 provides a ligand contact to Mg(2+). Glu-43 contributes to the K(+) binding site. Residues Glu-56 and Gln-99 each coordinate L-methionine. The tract at residues 99–109 (QSPDINQGVDR) is flexible loop. ATP-binding positions include 164–166 (DAK), 230–231 (RF), Asp-239, 245–246 (RK), Ala-262, and Lys-266. Asp-239 is a binding site for L-methionine. Lys-270 is an L-methionine binding site.

It belongs to the AdoMet synthase family. In terms of assembly, homotetramer; dimer of dimers. The cofactor is Mg(2+). K(+) is required as a cofactor.

The protein resides in the cytoplasm. It carries out the reaction L-methionine + ATP + H2O = S-adenosyl-L-methionine + phosphate + diphosphate. It participates in amino-acid biosynthesis; S-adenosyl-L-methionine biosynthesis; S-adenosyl-L-methionine from L-methionine: step 1/1. Catalyzes the formation of S-adenosylmethionine (AdoMet) from methionine and ATP. The overall synthetic reaction is composed of two sequential steps, AdoMet formation and the subsequent tripolyphosphate hydrolysis which occurs prior to release of AdoMet from the enzyme. The sequence is that of S-adenosylmethionine synthase from Pectobacterium carotovorum subsp. carotovorum (strain PC1).